Consider the following 181-residue polypeptide: Large ribosomal subunit protein uL5 (181 aa).

This sequence belongs to the universal ribosomal protein uL5 family. As to quaternary structure, part of the 50S ribosomal subunit; part of the 5S rRNA/L5/L18/L25 subcomplex. Contacts the 5S rRNA and the P site tRNA. Forms a bridge to the 30S subunit in the 70S ribosome.

In terms of biological role, this is one of the proteins that bind and probably mediate the attachment of the 5S RNA into the large ribosomal subunit, where it forms part of the central protuberance. In the 70S ribosome it contacts protein S13 of the 30S subunit (bridge B1b), connecting the 2 subunits; this bridge is implicated in subunit movement. Contacts the P site tRNA; the 5S rRNA and some of its associated proteins might help stabilize positioning of ribosome-bound tRNAs. The chain is Large ribosomal subunit protein uL5 from Campylobacter jejuni subsp. jejuni serotype O:6 (strain 81116 / NCTC 11828).